The chain runs to 455 residues: CDP-diacylglycerol--serine O-phosphatidyltransferase (455 aa).

2 consecutive PLD phosphodiesterase domains span residues 134-160 (VFGV…NNVY) and 356-383 (GDNT…NPRA).

It belongs to the CDP-alcohol phosphatidyltransferase class-II family. In terms of assembly, multimeric.

It localises to the cytoplasm. The protein localises to the cell inner membrane. It catalyses the reaction a CDP-1,2-diacyl-sn-glycerol + L-serine = a 1,2-diacyl-sn-glycero-3-phospho-L-serine + CMP + H(+). The sequence is that of CDP-diacylglycerol--serine O-phosphatidyltransferase (pssA) from Haemophilus influenzae (strain ATCC 51907 / DSM 11121 / KW20 / Rd).